The following is a 150-amino-acid chain: Ribonuclease H (150 aa).

Residues 1–146 enclose the RNase H type-1 domain; sequence MPELFAYTDG…ADELARAGMA (146 aa). Positions 9, 52, 74, and 138 each coordinate Mg(2+).

It belongs to the RNase H family. Monomer. Mg(2+) is required as a cofactor.

Its subcellular location is the cytoplasm. It catalyses the reaction Endonucleolytic cleavage to 5'-phosphomonoester.. Its function is as follows. Endonuclease that specifically degrades the RNA of RNA-DNA hybrids. This Roseobacter denitrificans (strain ATCC 33942 / OCh 114) (Erythrobacter sp. (strain OCh 114)) protein is Ribonuclease H.